The following is a 280-amino-acid chain: MTTTISQRKNRAAGANPLQKFWRKRRGDILPPIFGILGFLLLWQLISSAGLIKLPPPSSLWTDPRTRTLLMYPFYDQGGLDKGLFWQTLASLGRVAQGYSLAAIVGISTGILVGTQPLLDKALDPIFQFLRMVAPLAWVPIALVALQQNQPAAIFVIFITSVWPILINTTEGVKQIPQDYINVRKVLRLSPQKFFFKILIPSALPYIFTGLRIAIGLAWLAIIAAEIVMSGIVGIGFFIWDAYQQNYISEIILAVFYIGAVGLLLDRGIAYLQKLIAPGQ.

The next 7 membrane-spanning stretches (helical) occupy residues 32-52 (PIFG…AGLI), 99-119 (YSLA…QPLL), 126-146 (IFQF…LVAL), 153-173 (AIFV…TEGV), 198-218 (ILIP…IGLA), 219-239 (WLAI…GFFI), and 251-271 (IILA…GIAY). The ABC transmembrane type-1 domain occupies 88-266 (TLASLGRVAQ…YIGAVGLLLD (179 aa)).

The protein belongs to the binding-protein-dependent transport system permease family. As to quaternary structure, the complex is composed of two ATP-binding proteins (CmpC and CmpD), a transmembrane protein (CmpB) and a solute-binding protein (CmpA).

It localises to the cell inner membrane. Part of the ABC transporter complex CmpABCD involved in bicarbonate transport. Probably responsible for the translocation of the substrate across the membrane. In Synechocystis sp. (strain ATCC 27184 / PCC 6803 / Kazusa), this protein is Bicarbonate transport system permease protein CmpB (cmpB).